Reading from the N-terminus, the 268-residue chain is Small ribosomal subunit protein uS3 (268 aa).

In terms of domain architecture, KH type-2 spans 40 to 110 (IRNLFFINYR…KLDLTINEIG (71 aa)).

It belongs to the universal ribosomal protein uS3 family. In terms of assembly, part of the 30S ribosomal subunit. Forms a tight complex with proteins S10 and S14.

Binds the lower part of the 30S subunit head. Binds mRNA in the 70S ribosome, positioning it for translation. The polypeptide is Small ribosomal subunit protein uS3 (Mycoplasma genitalium (strain ATCC 33530 / DSM 19775 / NCTC 10195 / G37) (Mycoplasmoides genitalium)).